A 738-amino-acid polypeptide reads, in one-letter code: Phosphoribosylformylglycinamidine synthase subunit PurL (738 aa).

Histidine 53 is a catalytic residue. ATP contacts are provided by tyrosine 56 and lysine 95. Glutamate 97 contacts Mg(2+). Substrate is bound by residues serine 98–histidine 101 and arginine 120. The active-site Proton acceptor is histidine 99. Aspartate 121 contacts Mg(2+). Glutamine 244 contributes to the substrate binding site. Aspartate 274 contacts Mg(2+). Glutamate 318–glutamine 320 lines the substrate pocket. ATP is bound by residues aspartate 499 and glycine 536. Residue asparagine 537 participates in Mg(2+) binding. Serine 539 lines the substrate pocket.

The protein belongs to the FGAMS family. Monomer. Part of the FGAM synthase complex composed of 1 PurL, 1 PurQ and 2 PurS subunits.

The protein resides in the cytoplasm. It catalyses the reaction N(2)-formyl-N(1)-(5-phospho-beta-D-ribosyl)glycinamide + L-glutamine + ATP + H2O = 2-formamido-N(1)-(5-O-phospho-beta-D-ribosyl)acetamidine + L-glutamate + ADP + phosphate + H(+). It functions in the pathway purine metabolism; IMP biosynthesis via de novo pathway; 5-amino-1-(5-phospho-D-ribosyl)imidazole from N(2)-formyl-N(1)-(5-phospho-D-ribosyl)glycinamide: step 1/2. Functionally, part of the phosphoribosylformylglycinamidine synthase complex involved in the purines biosynthetic pathway. Catalyzes the ATP-dependent conversion of formylglycinamide ribonucleotide (FGAR) and glutamine to yield formylglycinamidine ribonucleotide (FGAM) and glutamate. The FGAM synthase complex is composed of three subunits. PurQ produces an ammonia molecule by converting glutamine to glutamate. PurL transfers the ammonia molecule to FGAR to form FGAM in an ATP-dependent manner. PurS interacts with PurQ and PurL and is thought to assist in the transfer of the ammonia molecule from PurQ to PurL. This Lacticaseibacillus paracasei (strain ATCC 334 / BCRC 17002 / CCUG 31169 / CIP 107868 / KCTC 3260 / NRRL B-441) (Lactobacillus paracasei) protein is Phosphoribosylformylglycinamidine synthase subunit PurL.